Here is a 479-residue protein sequence, read N- to C-terminus: Calcium-dependent mitochondrial ATP-magnesium/phosphate carrier protein 3 (479 aa).

Residues 1-208 are Mitochondrial intermembrane-facing; it reads MESSKPKNRN…ISKHVKRSRL (208 aa). EF-hand domains follow at residues 33–68, 69–104, 105–135, and 136–171; these read EREI…LQIP, PEYK…KELE, LYRI…AGIE, and IDDE…YPHE. The Ca(2+) site is built by Asp-82, Asn-84, Asp-86, Arg-88, and Glu-93. 5 residues coordinate Ca(2+): Asp-149, Asp-151, Asn-153, Thr-155, and Glu-160. Solcar repeat units follow at residues 203-286, 294-381, and 392-475; these read VKRS…LKPM, IGTS…LKDL, and PGPL…MKKN. The chain crosses the membrane as a helical span at residues 209–226; it reads LLAGGLAGAVSRTATAPL. Residues 227 to 260 are Mitochondrial matrix-facing; that stretch reads DRLKVVLQVQRAHAGVLPTIKKIWREDKLMGFFR. A helical membrane pass occupies residues 261–280; it reads GNGLNVMKVAPESAIKFCAY. Residues 281-303 are Mitochondrial intermembrane-facing; sequence EMLKPMIGGEDGDIGTSGRLMAG. A helical membrane pass occupies residues 304-317; that stretch reads GMAGALAQTAIYPM. Residues 318-355 lie on the Mitochondrial matrix side of the membrane; sequence DLVKTRLQTCVSEGGKAPKLWKLTKDIWVREGPRAFYK. A helical transmembrane segment spans residues 356-375; that stretch reads GLFPSLLGIVPYAGIDLAAY. At 376–397 the chain is on the mitochondrial intermembrane side; that stretch reads ETLKDLSRTYILQDTEPGPLIQ. The helical transmembrane segment at 398 to 415 threads the bilayer; it reads LSCGMTSGALGASCVYPL. At 416–449 the chain is on the mitochondrial matrix side; sequence QVVRTRMQADSSKTTMKQEFMNTMKGEGLRGFYR. A helical transmembrane segment spans residues 450 to 469; that stretch reads GLLPNLLKVVPAASITYIVY. Residues 470-479 are Mitochondrial intermembrane-facing; it reads EAMKKNMALD.

Belongs to the mitochondrial carrier (TC 2.A.29) family. Expressed in flowers, leaves, stems, roots and seedlings, mostly in seedlings.

Its subcellular location is the mitochondrion inner membrane. Counter-exchange transport activity is saturable and inhibited by pyridoxal-5'-phosphate, EDTA and EGTA. Activated by calcium Ca(2+) and manganese Mn(2+) ions, and slightly by iron Fe(2+) and zinc Zn(2+) ions. Repressed by copper ions Cu(2+) and slightly by magnesium Mg(2+) ions. Magnesium Mg(2+) ions promotes slightly ATP uptake, ATP-Mg(2+) being exchanged with ATP(4-). Its function is as follows. Calcium-dependent mitochondrial carrier protein that catalyzes the import of ATP co-transported with metal divalent cations across the mitochondrial inner membrane in exchange for phosphate (Pi). Can transport phosphate, AMP, ADP, ATP, adenosine 5'-phosphosulfate, sulfate and thiosulfate, and, to a lesser extent, other nucleotides. Binds calcium ions Ca(2+). Also mediates calcium uptake. In Arabidopsis thaliana (Mouse-ear cress), this protein is Calcium-dependent mitochondrial ATP-magnesium/phosphate carrier protein 3.